The sequence spans 286 residues: ATP phosphoribosyltransferase (286 aa).

It belongs to the ATP phosphoribosyltransferase family. Long subfamily. Mg(2+) is required as a cofactor.

It localises to the cytoplasm. It catalyses the reaction 1-(5-phospho-beta-D-ribosyl)-ATP + diphosphate = 5-phospho-alpha-D-ribose 1-diphosphate + ATP. The protein operates within amino-acid biosynthesis; L-histidine biosynthesis; L-histidine from 5-phospho-alpha-D-ribose 1-diphosphate: step 1/9. Its activity is regulated as follows. Feedback inhibited by histidine. Functionally, catalyzes the condensation of ATP and 5-phosphoribose 1-diphosphate to form N'-(5'-phosphoribosyl)-ATP (PR-ATP). Has a crucial role in the pathway because the rate of histidine biosynthesis seems to be controlled primarily by regulation of HisG enzymatic activity. This chain is ATP phosphoribosyltransferase, found in Cytophaga hutchinsonii (strain ATCC 33406 / DSM 1761 / CIP 103989 / NBRC 15051 / NCIMB 9469 / D465).